A 400-amino-acid chain; its full sequence is Formate-dependent phosphoribosylglycinamide formyltransferase (400 aa).

N(1)-(5-phospho-beta-D-ribosyl)glycinamide contacts are provided by residues 22–23 and Glu82; that span reads EL. ATP-binding positions include Arg115, Lys157, 162-167, 197-200, and Glu205; these read SSGKGQ and EGFI. The region spanning 120 to 315 is the ATP-grasp domain; sequence RLAAETLGLP…EFELHARAIL (196 aa). Mg(2+) contacts are provided by Glu274 and Glu286. Residues Asp293, Lys362, and 369–370 contribute to the N(1)-(5-phospho-beta-D-ribosyl)glycinamide site; that span reads RR.

Belongs to the PurK/PurT family. Homodimer.

The catalysed reaction is N(1)-(5-phospho-beta-D-ribosyl)glycinamide + formate + ATP = N(2)-formyl-N(1)-(5-phospho-beta-D-ribosyl)glycinamide + ADP + phosphate + H(+). It functions in the pathway purine metabolism; IMP biosynthesis via de novo pathway; N(2)-formyl-N(1)-(5-phospho-D-ribosyl)glycinamide from N(1)-(5-phospho-D-ribosyl)glycinamide (formate route): step 1/1. In terms of biological role, involved in the de novo purine biosynthesis. Catalyzes the transfer of formate to 5-phospho-ribosyl-glycinamide (GAR), producing 5-phospho-ribosyl-N-formylglycinamide (FGAR). Formate is provided by PurU via hydrolysis of 10-formyl-tetrahydrofolate. This chain is Formate-dependent phosphoribosylglycinamide formyltransferase, found in Cupriavidus metallidurans (strain ATCC 43123 / DSM 2839 / NBRC 102507 / CH34) (Ralstonia metallidurans).